The chain runs to 1490 residues: Leucine-rich repeat-containing protein 7 (1490 aa).

LRR repeat units lie at residues 23-44 (IISV…VFNF), 47-68 (TLEE…LFNC), 70-91 (ALRK…IASL), 93-114 (NLKE…IKCC), 116-137 (CLTI…FTQL), 139-161 (NLTQ…GRLV), 162-183 (KLRI…MHKL), 185-206 (QLER…LDQI), 208-229 (NLRE…IGKL), 231-253 (MLVY…SGCE), 254-275 (ALED…IGLL), 277-298 (KLTT…IGNL), 300-321 (LLEE…IGYL), 323-344 (SLRT…IGSC), 346-367 (NVTV…IGQM), 369-391 (RLRV…TKLK), and 392-413 (ELAA…QTEA). A phosphoserine mark is found at Ser439, Ser441, and Ser443. The span at 663 to 676 (KKESTDESEVDKTH) shows a compositional bias: basic and acidic residues. 3 disordered regions span residues 663–704 (KKES…NTRM), 785–807 (AGEN…AHGR), and 822–899 (ELEQ…YHDP). Over residues 677 to 686 (CLNNSVSSGT) the composition is skewed to polar residues. The segment covering 687–700 (YSDYSPSQASSASS) has biased composition (low complexity). Phosphothreonine is present on Thr831. Ser850 is subject to Phosphoserine. The segment covering 859–871 (PSKLETTPTTSPL) has biased composition (low complexity). Thr865 carries the phosphothreonine modification. Ser869 carries the phosphoserine modification. A compositionally biased stretch (basic and acidic residues) spans 872–882 (PERKDHMKEPT). A phosphoserine mark is found at Ser947, Ser949, and Ser1118. Basic and acidic residues predominate over residues 1134–1144 (PHELPPGDRYG). Disordered regions lie at residues 1134–1158 (PHEL…QSSI) and 1196–1218 (QRRP…TRPV). Arg1149 carries the post-translational modification Omega-N-methylarginine. Residues 1196-1217 (QRRPLSARSYSTESYGASQTRP) show a composition bias toward polar residues. Position 1233 is a phosphoserine (Ser1233). 2 disordered regions span residues 1238-1265 (GNYG…SCGK) and 1282-1312 (RLDR…PYPL). Residues 1243–1263 (KTSDNSDIKTRPTPVKGEESC) show a composition bias toward basic and acidic residues. The segment covering 1286 to 1307 (TPSQQSNILDNGQEDVSPSGQW) has biased composition (polar residues). Residues Ser1288 and Ser1392 each carry the phosphoserine modification. The PDZ domain maps to 1398-1488 (EQFCVRIEKN…TVDLVIQREL (91 aa)).

The protein belongs to the LAP (LRR and PDZ) protein family. As to quaternary structure, interacts with CNKSR2 and DLG4. Interacts with CTNND2/Catenin delta-2. Forms a complex with N-cadherin through CTNND2. Interacts with CAMK2A. Expressed in brain (at protein level).

The protein localises to the cytoplasm. Its subcellular location is the postsynaptic density. In terms of biological role, required for normal synaptic spine architecture and function. Necessary for DISC1 and GRM5 localization to postsynaptic density complexes and for both N-methyl D-aspartate receptor-dependent and metabotropic glutamate receptor-dependent long term depression. The protein is Leucine-rich repeat-containing protein 7 (Lrrc7) of Mus musculus (Mouse).